A 184-amino-acid polypeptide reads, in one-letter code: Endothelial cell-specific molecule 1 (184 aa).

The N-terminal stretch at 1 to 21 (MKSLLLLTTLLVPLHLGMAWS) is a signal peptide. The 79-residue stretch at 24 to 102 (YAVDCPEHCD…GDEFGICKDC (79 aa)) folds into the IGFBP N-terminal domain. 6 disulfide bridges follow: C28/C51, C32/C53, C37/C54, C43/C57, C65/C83, and C77/C99. The interval 145–184 (RTSASHTERDSASGDGNAVREEIGEGNAARPSVMKWLNPR) is disordered. Residues 150–167 (HTERDSASGDGNAVREEI) are compositionally biased toward basic and acidic residues. S157 carries an O-linked (Xyl...) (chondroitin sulfate) serine glycan.

Post-translationally, O-glycosylated; contains chondroitin sulfate and dermatan sulfate.

It is found in the secreted. In terms of biological role, involved in angiogenesis; promotes angiogenic sprouting. May have potent implications in lung endothelial cell-leukocyte interactions. The polypeptide is Endothelial cell-specific molecule 1 (Esm1) (Mus musculus (Mouse)).